Here is a 500-residue protein sequence, read N- to C-terminus: 4-aminobutyrate aminotransferase, mitochondrial (500 aa).

Residues 1–27 (MAFLLTTRRLVCSSQKNLHLFTPGSRY) constitute a mitochondrion transit peptide. [2Fe-2S] cluster is bound at residue C163. 164–165 (GS) contacts pyridoxal 5'-phosphate. C166 contributes to the [2Fe-2S] cluster binding site. A substrate-binding site is contributed by R220. Residue K231 is modified to N6-succinyllysine. K252 carries the post-translational modification N6-acetyllysine; alternate. K252 carries the post-translational modification N6-succinyllysine; alternate. N6-acetyllysine occurs at positions 279 and 318. K357 is modified (N6-(pyridoxal phosphate)lysine). T381 lines the pyridoxal 5'-phosphate pocket. At K413 the chain carries N6-acetyllysine; alternate. Position 413 is an N6-succinyllysine; alternate (K413). Residues K452 and K470 each carry the N6-acetyllysine modification.

The protein belongs to the class-III pyridoxal-phosphate-dependent aminotransferase family. As to quaternary structure, homodimer; disulfide-linked. Requires pyridoxal 5'-phosphate as cofactor. [2Fe-2S] cluster serves as cofactor.

Its subcellular location is the mitochondrion matrix. It carries out the reaction 4-aminobutanoate + 2-oxoglutarate = succinate semialdehyde + L-glutamate. It catalyses the reaction (S)-3-amino-2-methylpropanoate + 2-oxoglutarate = 2-methyl-3-oxopropanoate + L-glutamate. Catalyzes the conversion of gamma-aminobutyrate and L-beta-aminoisobutyrate to succinate semialdehyde and methylmalonate semialdehyde, respectively. Can also convert delta-aminovalerate and beta-alanine. The chain is 4-aminobutyrate aminotransferase, mitochondrial from Rattus norvegicus (Rat).